A 468-amino-acid polypeptide reads, in one-letter code: uncharacterized protein (468 aa).

The disordered stretch occupies residues 447-468 (AVHVSNGDKPKVALPDTQLGSH).

It belongs to the mycobacterial PPE family.

This is an uncharacterized protein from Mycobacterium tuberculosis (strain CDC 1551 / Oshkosh).